The primary structure comprises 145 residues: Transcription antitermination protein NusB (145 aa).

The protein belongs to the NusB family.

Involved in transcription antitermination. Required for transcription of ribosomal RNA (rRNA) genes. Binds specifically to the boxA antiterminator sequence of the ribosomal RNA (rrn) operons. The sequence is that of Transcription antitermination protein NusB from Psychromonas ingrahamii (strain DSM 17664 / CCUG 51855 / 37).